A 468-amino-acid chain; its full sequence is Probable protein phosphatase 2C 52 (468 aa).

The region spanning 67–372 (SSCIFTQQGR…DDCAVVCLFL (306 aa)) is the PPM-type phosphatase domain. Residues Asp102, Gly103, Asp317, and Asp363 each coordinate Mn(2+). The span at 413-429 (RSSSDQENETYGNVNTE) shows a compositional bias: polar residues. The tract at residues 413–442 (RSSSDQENETYGNVNTETDAEDEKTVGDQN) is disordered.

It belongs to the PP2C family. The cofactor is Mg(2+). Requires Mn(2+) as cofactor.

It catalyses the reaction O-phospho-L-seryl-[protein] + H2O = L-seryl-[protein] + phosphate. The enzyme catalyses O-phospho-L-threonyl-[protein] + H2O = L-threonyl-[protein] + phosphate. The protein is Probable protein phosphatase 2C 52 of Arabidopsis thaliana (Mouse-ear cress).